The following is a 543-amino-acid chain: Early growth response protein 1 (543 aa).

Disordered regions lie at residues 1 to 105 (MAAA…AESF), 165 to 213 (TNPP…PTPN), and 264 to 284 (LGLGTPDQKPFQGLESRTQQP). The segment covering 57-66 (GSGSNSSSSS) has biased composition (low complexity). Over residues 67-77 (SGGGGGGGGGS) the composition is skewed to gly residues. Low complexity predominate over residues 167-189 (PPASSSSAPSPAASSASASQSPP). Lys-305 is covalently cross-linked (Glycyl lysine isopeptide (Lys-Gly) (interchain with G-Cter in SUMO2)). The interval 318–339 (PSRMRKYPNRPSKTPPHERPYA) is disordered. C2H2-type zinc fingers lie at residues 338-362 (YACPVESCDRRFSRSDELTRHIRIH), 368-390 (FQCRICMRNFSRSDHLTTHIRTH), and 396-418 (FACDICGRKFARSDERKRHTKIH). The disordered stretch occupies residues 409–487 (DERKRHTKIH…GSSTYPSPVH (79 aa)). The segment covering 413–423 (RHTKIHLRQKD) has biased composition (basic residues). The segment covering 429–486 (SVVASSATSSLSSYPSPVATSYPSPVTTSYPSPATTSYPSPVPTSFSSPGSSTYPSPV) has biased composition (low complexity).

The protein belongs to the EGR C2H2-type zinc-finger protein family. As to quaternary structure, interacts with SNAI1 and SP1 upon 12-O-tetradecanoylphorbol-13-acetate (TPA) induction. As to expression, detected in neutrophils (at protein level).

The protein localises to the nucleus. It is found in the cytoplasm. Functionally, transcriptional regulator. Recognizes and binds to the DNA sequence 5'-GCG(T/G)GGGCG-3'(EGR-site) in the promoter region of target genes. Binds double-stranded target DNA, irrespective of the cytosine methylation status. Regulates the transcription of numerous target genes, and thereby plays an important role in regulating the response to growth factors, DNA damage, and ischemia. Plays a role in the regulation of cell survival, proliferation and cell death. Activates expression of p53/TP53 and TGFB1, and thereby helps prevent tumor formation. Required for normal progress through mitosis and normal proliferation of hepatocytes after partial hepatectomy. Mediates responses to ischemia and hypoxia; regulates the expression of proteins such as IL1B and CXCL2 that are involved in inflammatory processes and development of tissue damage after ischemia. Regulates biosynthesis of luteinizing hormone (LHB) in the pituitary. Regulates the amplitude of the expression rhythms of clock genes: BMAL1, PER2 and NR1D1 in the liver via the activation of PER1 (clock repressor) transcription. Regulates the rhythmic expression of core-clock gene BMAL1 in the suprachiasmatic nucleus (SCN). The protein is Early growth response protein 1 (EGR1) of Homo sapiens (Human).